The following is a 200-amino-acid chain: Ras-related protein Rab-7b (200 aa).

GTP contacts are provided by residues 15-22 (GALGVGKT), 34-40 (YEDYQTT), 63-67 (DTGGQ), 124-127 (NKID), and 154-155 (AK). 2 consecutive short sequence motifs (switch) follow at residues 28–41 (YVHK…QTTL) and 67–82 (QERF…KGSD). Residue S186 is modified to Phosphoserine. S-geranylgeranyl cysteine attachment occurs at residues C199 and C200.

The protein belongs to the small GTPase superfamily. Rab family.

Its subcellular location is the late endosome. The protein resides in the lysosome. The protein localises to the golgi apparatus. It localises to the trans-Golgi network. It is found in the cytoplasmic vesicle. Its subcellular location is the phagosome. The protein resides in the phagosome membrane. In terms of biological role, controls vesicular trafficking from endosomes to the trans-Golgi network (TGN). Acts as a negative regulator of TLR9 signaling and can suppress TLR9-triggered TNFA, IL6, and IFNB production in macrophages by promoting TLR9 lysosomal degradation. Also negatively regulates TLR4 signaling in macrophages by promoting lysosomal degradation of TLR4. Promotes megakaryocytic differentiation by increasing NF-kappa-B-dependent IL6 production and subsequently enhancing the association of STAT3 with GATA1. Not involved in the regulation of the EGF- and EGFR degradation pathway. This Bos taurus (Bovine) protein is Ras-related protein Rab-7b (RAB7B).